The following is a 2535-amino-acid chain: Piezo-type mechanosensitive ion channel component 1 (2535 aa).

3 consecutive transmembrane segments (helical) span residues leucine 13–leucine 25, alanine 29–leucine 44, and leucine 59–leucine 81. A glycan (N-linked (GlcNAc...) asparagine) is linked at asparagine 100. Helical transmembrane passes span valine 122–leucine 138, leucine 193–alanine 212, serine 215–cysteine 234, leucine 246–threonine 266, and tryptophan 308–leucine 328. Residues aspartate 346–glutamate 357 are compositionally biased toward acidic residues. The segment at aspartate 346 to aspartate 377 is disordered. A compositionally biased stretch (low complexity) spans proline 358–proline 376. Residue asparagine 380 is glycosylated (N-linked (GlcNAc...) asparagine). The next 8 helical transmembrane spans lie at leucine 416–tyrosine 436, tryptophan 439–valine 454, leucine 460–tryptophan 482, cysteine 510–leucine 527, isoleucine 572–glycine 592, leucine 594–valine 614, valine 625–phenylalanine 646, and leucine 677–leucine 693. Serine 749 is modified (phosphoserine). Helical transmembrane passes span leucine 803–lysine 814, valine 818–leucine 831, valine 846–leucine 860, glycine 913–arginine 940, glycine 981–arginine 996, phenylalanine 999–arginine 1014, cysteine 1028–leucine 1043, threonine 1083–alanine 1104, tyrosine 1140–threonine 1166, glycine 1172–leucine 1190, leucine 1204–serine 1222, and isoleucine 1272–phenylalanine 1288. Residues histidine 1325–serine 1356 are a coiled coil. Disordered regions lie at residues alanine 1345–tryptophan 1383 and serine 1556–serine 1597. The span at glutamine 1352–proline 1365 shows a compositional bias: polar residues. Serine 1372 and serine 1377 each carry phosphoserine. A compositionally biased stretch (polar residues) spans serine 1579 to serine 1597. Phosphoserine is present on residues serine 1614, serine 1618, and serine 1633. Helical transmembrane passes span proline 1644–methionine 1687, alanine 1692–leucine 1707, phenylalanine 1716–phenylalanine 1734, and aspartate 1767–leucine 1788. Composition is skewed to basic and acidic residues over residues proline 1801–aspartate 1811 and proline 1842–proline 1867. Positions proline 1801 to leucine 1911 are disordered. Residues glutamine 1868–lysine 1881 show a composition bias toward basic residues. Transmembrane regions (helical) follow at residues tyrosine 1965–tryptophan 1984, proline 2005–isoleucine 2021, alanine 2036–valine 2056, alanine 2065–leucine 2080, and glycine 2181–isoleucine 2201. A disulfide bond links cysteine 2425 and cysteine 2429. The helical transmembrane segment at leucine 2446–glycine 2466 threads the bilayer.

The protein belongs to the PIEZO (TC 1.A.75) family. In terms of assembly, homotrimer; the homotrimer forms a propeller-shaped Piezo channel with a cation-ion conducting pore. Heterotrimeric interaction may occur between PIEZO1 and PIEZO2. Interacts with PKD2. Interacts with STOM13. Interacts with TMC1, TMC2, PCDH15 and CIB2; the interaction may be part of the MET complex. Interacts with MDFIC (via C-terminus); the interaction prolongs Piezo channel inactivation. Interacts with MDFI (via C-terminus); the interaction prolongs Piezo channel inactivation. In terms of tissue distribution, moderate expression in lung and kidney. Very weak expression in heart, spleen and liver.

The protein resides in the endoplasmic reticulum membrane. The protein localises to the endoplasmic reticulum-Golgi intermediate compartment membrane. It is found in the cell membrane. It localises to the cell projection. Its subcellular location is the lamellipodium membrane. It carries out the reaction K(+)(in) = K(+)(out). The catalysed reaction is Na(+)(in) = Na(+)(out). It catalyses the reaction Ca(2+)(in) = Ca(2+)(out). The enzyme catalyses Mg(2+)(in) = Mg(2+)(out). Regulated by auxillary subunits MDFIC and MDFI. Down-regulated by phosphatidylserines exposed on the cell surface. Divalent ions decrease the single-channel permeability of K(+). Its function is as follows. Pore-forming subunit of the mechanosensitive non-specific cation Piezo channel required for rapidly adapting mechanically activated (MA) currents and has a key role in sensing touch and tactile pain. Piezo channels are homotrimeric three-blade propeller-shaped structures that utilize a cap-motion and plug-and-latch mechanism to gate their ion-conducting pathways. Generates currents characterized by a linear current-voltage relationship that are sensitive to ruthenium red and gadolinium. Conductance to monovalent alkali ions is highest for K(+), intermediate for Na(+) and lowest for Li(+). Divalent ions except for Mn(2+) permeate the channel but more slowly than the monovalent ions and they also reduce K(+) currents. Plays a key role in epithelial cell adhesion by maintaining integrin activation through R-Ras recruitment to the ER, most probably in its activated state, and subsequent stimulation of calpain signaling. In inner ear hair cells, PIEZO1/2 subunits may constitute part of the mechanotransducer (MET) non-selective cation channel complex where they may act as pore-forming ion-conducting component in the complex. In the kidney, may contribute to the detection of intraluminal pressure changes and to urine flow sensing. Acts as a shear-stress sensor that promotes endothelial cell organization and alignment in the direction of blood flow through calpain activation. Plays a key role in blood vessel formation and vascular structure in both development and adult physiology. Acts as a sensor of phosphatidylserine (PS) flipping at the plasma membrane and governs morphogenesis of muscle cells. In myoblasts, flippase-mediated PS enrichment at the inner leaflet of plasma membrane triggers channel activation and Ca(2+) influx followed by Rho GTPases signal transduction, leading to assembly of cortical actomyosin fibers and myotube formation. The protein is Piezo-type mechanosensitive ion channel component 1 (Piezo1) of Rattus norvegicus (Rat).